The primary structure comprises 504 residues: Malonyl-CoA decarboxylase, mitochondrial (504 aa).

A mitochondrion-targeting transit peptide spans 1–50 (MRGLRRGLSRLGPRLGPWAVPRSLRRVLRAAGPWRGQSSAGSVSERGGAS). Residues 51–201 (MEEVLSRSVP…VLKNMLSEWF (151 aa)) are alpha-helical domain. The catalytic domain stretch occupies residues 202–504 (STGFLNLERV…VSQFQQNSKL (303 aa)). Catalysis depends on Ser340, which acts as the Proton acceptor. His434 acts as the Proton donor in catalysis. The short motif at 502 to 504 (SKL) is the Microbody targeting signal element.

It localises to the mitochondrion. The protein localises to the cytoplasm. It is found in the peroxisome. The catalysed reaction is malonyl-CoA + H(+) = acetyl-CoA + CO2. It functions in the pathway metabolic intermediate biosynthesis; acetyl-CoA biosynthesis; acetyl-CoA from malonyl-CoA: step 1/1. Functionally, catalyzes the conversion of malonyl-CoA to acetyl-CoA. In the fatty acid biosynthesis MCD selectively removes malonyl-CoA and thus assures that methyl-malonyl-CoA is the only chain elongating substrate for fatty acid synthase and that fatty acids with multiple methyl side chains are produced. The protein is Malonyl-CoA decarboxylase, mitochondrial (MLYCD) of Anser anser anser (Western greylag goose).